A 318-amino-acid polypeptide reads, in one-letter code: NADH-ubiquinone oxidoreductase chain 1 (318 aa).

The next 8 helical transmembrane spans lie at 3–23, 69–89, 102–122, 146–166, 171–191, 222–242, 253–273, and 294–314; these read FMNL…LTLL, VLFI…WIPL, ILFM…SGWA, LAII…STLI, HIWL…STLA, LFFL…IILF, ELYT…FLWV, and LPLT…LAGI.

This sequence belongs to the complex I subunit 1 family. In terms of assembly, core subunit of respiratory chain NADH dehydrogenase (Complex I) which is composed of 45 different subunits.

Its subcellular location is the mitochondrion inner membrane. The catalysed reaction is a ubiquinone + NADH + 5 H(+)(in) = a ubiquinol + NAD(+) + 4 H(+)(out). In terms of biological role, core subunit of the mitochondrial membrane respiratory chain NADH dehydrogenase (Complex I) which catalyzes electron transfer from NADH through the respiratory chain, using ubiquinone as an electron acceptor. Essential for the catalytic activity and assembly of complex I. The polypeptide is NADH-ubiquinone oxidoreductase chain 1 (MT-ND1) (Cnephaeus nilssonii (Northern bat)).